A 609-amino-acid chain; its full sequence is Probable G-protein coupled receptor 153 (609 aa).

Residues 1–11 (MSDERRLPGSA) lie on the Extracellular side of the membrane. The chain crosses the membrane as a helical span at residues 12 to 32 (VGWLVCGGLSLLANAWGILSV). Topologically, residues 33–41 (GAKQKKWKP) are cytoplasmic. Residues 42–62 (LEFLLCTLAATHMLNVAVPIA) form a helical membrane-spanning segment. The Extracellular portion of the chain corresponds to 63 to 84 (TYSVVQLRRQRPDFEWNEGLCK). Residues 85–105 (VFVSTFYTLTLATCFSVTSLS) form a helical membrane-spanning segment. Residues 106–126 (YHRMWMVCWPVNYRLSNAKKQ) lie on the Cytoplasmic side of the membrane. A helical membrane pass occupies residues 127-147 (AVHTVMGIWMVSFILSALPAV). At 148–175 (GWHDTSERFYTHGCRFIVAEIGLGFGVC) the chain is on the extracellular side. Residues 176–196 (FLLLVGGSVAMGVICTAIALF) traverse the membrane as a helical segment. The Cytoplasmic portion of the chain corresponds to 197-243 (QTLAVQVGRQADRRAFTVPTIVVEDAQGKRRSSIDGSEPAKTSLQTT). A helical membrane pass occupies residues 244-264 (GLVTTIVFIYDCLMGFPVLVV). Topologically, residues 265–276 (SFSSLRADASAP) are extracellular. The chain crosses the membrane as a helical span at residues 277–297 (WMALCVLWCSVAQALLLPVFL). The Cytoplasmic portion of the chain corresponds to 298–609 (WACDRYRADL…LHSDSLGSAS (312 aa)). Disordered stretches follow at residues 446–496 (DAPP…SASA) and 514–609 (ALRR…GSAS). 2 stretches are compositionally biased toward low complexity: residues 458-479 (ESLL…RDSP) and 527-536 (AAPDGADPGE). Positions 571–583 (EPGGLRAAGGGGS) are enriched in gly residues. Positions 584-596 (TSSFLSSPSESSG) are enriched in low complexity.

This sequence belongs to the G-protein coupled receptor 1 family.

The protein localises to the cell membrane. Its function is as follows. Orphan receptor. The polypeptide is Probable G-protein coupled receptor 153 (GPR153) (Homo sapiens (Human)).